A 1977-amino-acid chain; its full sequence is Voltage-dependent L-type calcium channel subunit alpha-1F (1977 aa).

Residues 1–11 (MSESEGGKDTT) show a composition bias toward basic and acidic residues. Residues 1–60 (MSESEGGKDTTPEPSPANGAGPGPEWGLCPGPPAVEGESSGASGLGTPKRRNQHSKHKTV) are disordered. The Cytoplasmic segment spans residues 1–92 (MSESEGGKDT…RSCISIVEWK (92 aa)). Residues 48–59 (PKRRNQHSKHKT) show a composition bias toward basic residues. One copy of the I repeat lies at 79 to 375 (NPLRRSCISI…LVLGVLSGEF (297 aa)). Residues 93–111 (PFDILILLTIFANCVALGV) traverse the membrane as a helical segment. The Extracellular portion of the chain corresponds to 112–129 (YIPFPEDDSNTANHNLEQ). The chain crosses the membrane as a helical span at residues 130 to 149 (VEYVFLVIFTVETVLKIVAY). Topologically, residues 150–161 (GLVLHPSAYIRN) are cytoplasmic. The chain crosses the membrane as a helical span at residues 162–180 (GWNLLDFIIVVVGLFSVLL). At 181 to 201 (EQGPGRPGDAPHTGGKPGGFD) the chain is on the extracellular side. The chain crosses the membrane as a helical span at residues 202-220 (VKALRAFRVLRPLRLVSGV). The Cytoplasmic portion of the chain corresponds to 221 to 239 (PSLHIVLNSIMKALVPLLH). A helical membrane pass occupies residues 240–259 (IALLVLFVIIIYAIIGLELF). The Extracellular segment spans residues 260-347 (LGRMHKTCYF…WMQDAMGYEL (88 aa)). N-linked (GlcNAc...) asparagine glycosylation occurs at N295. A Ca(2+)-binding site is contributed by E330. Residues 348-372 (PWVYFVSLVIFGSFFVLNLVLGVLS) form a helical membrane-spanning segment. Residues 373–529 (GEFSKEREKA…ARCRRAVKSN (157 aa)) are Cytoplasmic-facing. The binding to the beta subunit stretch occupies residues 395–412 (QQMEEDLRGYLDWITQAE). Disordered regions lie at residues 418-441 (DPSADDNLGSMAEEGRAGHRPQLA) and 455-488 (SHSTRSTHSTSSHASLPASDTGSMTETQGDEDEE). Residues 455 to 469 (SHSTRSTHSTSSHAS) are compositionally biased toward low complexity. Residues 515-761 (NRVLRARCRR…VFLAIAVDNL (247 aa)) form an II repeat. The chain crosses the membrane as a helical span at residues 530 to 549 (ACYWAVLLLVFLNTLTIASE). Over 550–564 (HHGQPVWLTQIQEYA) the chain is Extracellular. A helical transmembrane segment spans residues 565–583 (NKVLLCLFTVEMLLKLYGL). At 584 to 591 (GPSAYVSS) the chain is on the cytoplasmic side. Residues 592–610 (FFNRFDCFVVCGGILETTL) form a helical membrane-spanning segment. Residues 611–620 (VEVGAMQPLG) lie on the Extracellular side of the membrane. A helical membrane pass occupies residues 621–639 (ISVLRCVRLLRIFKVTRHW). The Cytoplasmic segment spans residues 640–658 (ASLSNLVASLLNSMKSIAS). Residues 659 to 679 (LLLLLFLFIIIFSLLGMQLFG) form a helical membrane-spanning segment. Residues 680–733 (GKFNFDQTHTKRSTFDTFPQALLTVFQILTGEDWNVVMYDGIMAYGGPFFPGML) are Extracellular-facing. Position 711 (E711) interacts with Ca(2+). A helical transmembrane segment spans residues 734 to 758 (VCIYFIILFICGNYILLNVFLAIAV). Residues 759-871 (DNLASGDAGT…KGCHTLIHHH (113 aa)) are Cytoplasmic-facing. Residues 767 to 830 (GTAKDKGGEK…EEEEEGAGGV (64 aa)) form a disordered region. Positions 768–783 (TAKDKGGEKSNEKDLP) are enriched in basic and acidic residues. Residues 807 to 826 (DMEEEEEEEEEEEEEEEEEG) are compositionally biased toward acidic residues. An III repeat occupies 858-1140 (NPLRKGCHTL…IFVGFVIITF (283 aa)). A helical membrane pass occupies residues 872–890 (VFTNLILVFIILSSVSLAA). Topologically, residues 891-906 (EDPIRAHSFRNHILGY) are extracellular. A helical membrane pass occupies residues 907 to 926 (FDYAFTSIFTVEILLKMTVF). Topologically, residues 927–938 (GAFLHRGSFCRS) are cytoplasmic. Residues 939–957 (WFNMLDLLVVSVSLISFGI) traverse the membrane as a helical segment. The Extracellular segment spans residues 958-963 (HSSAIS). Residues 964 to 983 (VVKILRVLRVLRPLRAINRA) form a helical membrane-spanning segment. At 984 to 1002 (KGLKHVVQCVFVAIRTIGN) the chain is on the cytoplasmic side. Residues 1003–1022 (IMIVTTLLQFMFACIGVQLF) form a helical membrane-spanning segment. The Extracellular portion of the chain corresponds to 1023-1112 (KGKFYTCTDE…HGPIYNYRVE (90 aa)). The segment at 1060–1150 (RLWVNSDFNF…RAQGEQEYQN (91 aa)) is dihydropyridine binding. E1086 is a Ca(2+) binding site. Residues 1113 to 1133 (ISVFFIVYIIIIAFFMMNIFV) traverse the membrane as a helical segment. At 1134–1190 (GFVIITFRAQGEQEYQNCELDKNQRQCVEYALKAQPLRRYIPKNPHQYRVWATVNSA) the chain is on the cytoplasmic side. Residues 1177–1444 (NPHQYRVWAT…LFVAVIMDNF (268 aa)) form an IV repeat. The helical transmembrane segment at 1191 to 1209 (AFEYLMFLLILLNTVALAM) threads the bilayer. Topologically, residues 1210–1224 (QHYEQTAPFNYAMDI) are extracellular. Residues 1225–1244 (LNMVFTGLFTIEMVLKIIAF) form a helical membrane-spanning segment. Topologically, residues 1245–1251 (KPKHYFT) are cytoplasmic. A helical membrane pass occupies residues 1252–1273 (DAWNTFDALIVVGSIVDIAVTE). Topologically, residues 1274 to 1290 (VNNGGHLGESSEDSSRI) are extracellular. Residues 1291 to 1310 (SITFFRLFRVMRLVKLLSKG) form a helical membrane-spanning segment. The Cytoplasmic segment spans residues 1311-1329 (EGIRTLLWTFIKSFQALPY). The chain crosses the membrane as a helical span at residues 1330-1349 (VALLIAMIFFIYAVIGMQMF). At 1350-1416 (GKVALQDGTQ…GEEFTCGSNF (67 aa)) the chain is on the extracellular side. Residues 1397 to 1463 (RCDPESDFGP…LGPHHLDEFK (67 aa)) are dihydropyridine binding. Residues 1409 to 1452 (EFTCGSNFAIAYFISFFMLCAFLIINLFVAVIMDNFDYLTRDWS) are phenylalkylamine binding. A helical transmembrane segment spans residues 1417-1441 (AIAYFISFFMLCAFLIINLFVAVIM). Residues 1442-1977 (DNFDYLTRDW…GDEMACVHAL (536 aa)) lie on the Cytoplasmic side of the membrane. Disordered stretches follow at residues 1637–1754 (CDTE…EVPD) and 1816–1841 (DLPIPGTYHRGRNSGPNRAQGSWATP). Residues 1638 to 1657 (DTEEEEEEGQEGVEEEDEKD) show a composition bias toward acidic residues. 4 stretches are compositionally biased toward polar residues: residues 1661 to 1670 (NKATMVSQPS), 1702 to 1716 (TPTSSQPSVPQAGSN), 1733 to 1743 (GNSQPKGTKGQ), and 1829 to 1840 (SGPNRAQGSWAT).

The protein belongs to the calcium channel alpha-1 subunit (TC 1.A.1.11) family. CACNA1F subfamily. As to quaternary structure, voltage-dependent calcium channels are multisubunit complexes, consisting of alpha-1, alpha-2, beta and delta subunits in a 1:1:1:1 ratio. The channel activity is directed by the pore-forming and voltage-sensitive alpha-1 subunit. In many cases, this subunit is sufficient to generate voltage-sensitive calcium channel activity. The auxiliary subunits beta and alpha-2/delta linked by a disulfide bridge regulate the channel activity. Interacts (via IQ domain) with CABP4; in a calcium independent manner. Interacts with CABP4; suppresses robust calcium-dependent inactivation of channel without enhancing the hyperpolarized voltage-dependent activation. In terms of tissue distribution, expression in skeletal muscle and retina. Isoform 4 is expressed in retina.

The protein resides in the membrane. It carries out the reaction Ca(2+)(in) = Ca(2+)(out). Its function is as follows. Voltage-sensitive calcium channels (VSCC) mediate the entry of calcium ions into excitable cells and are also involved in a variety of calcium-dependent processes, including muscle contraction, hormone or neurotransmitter release, gene expression, cell motility, cell division and cell death. The isoform alpha-1F gives rise to L-type calcium currents. Long-lasting (L-type) calcium channels belong to the 'high-voltage activated' (HVA) group. They are blocked by dihydropyridines (DHP), phenylalkylamines, and by benzothiazepines. Activates at more negative voltages and does not undergo calcium-dependent inactivation (CDI), due to incoming calcium ions, during depolarization. In terms of biological role, voltage-dependent L-type calcium channel activates at more hyperpolarized voltages and exhibits a robust calcium-dependent inactivation (CDI), due to incoming calcium ions, during depolarizations. Functionally, voltage-sensitive calcium channels (VSCC) mediate the entry of calcium ions into excitable cells and are also involved in a variety of calcium-dependent processes, including muscle contraction, hormone or neurotransmitter release, gene expression, cell motility, cell division and cell death. This is Voltage-dependent L-type calcium channel subunit alpha-1F from Homo sapiens (Human).